The following is a 129-amino-acid chain: Small ribosomal subunit protein uS11 (129 aa).

This sequence belongs to the universal ribosomal protein uS11 family. Part of the 30S ribosomal subunit. Interacts with proteins S7 and S18. Binds to IF-3.

Located on the platform of the 30S subunit, it bridges several disparate RNA helices of the 16S rRNA. Forms part of the Shine-Dalgarno cleft in the 70S ribosome. The chain is Small ribosomal subunit protein uS11 from Haemophilus influenzae (strain 86-028NP).